The sequence spans 255 residues: U2 small nuclear ribonucleoprotein A' (255 aa).

4 LRR repeats span residues 20 to 41 (RDRE…GATL), 43 to 64 (QFDA…PLLR), 65 to 86 (RLKT…LDQA), and 89 to 110 (CLTE…DPLA). One can recognise an LRRCT domain in the interval 123 to 161 (NPVTNKKHYRLYVIYKVPQVRVLDFQKVKLKERQEAEKM). Position 172 is an N6-acetyllysine; alternate (K172). Residue K172 forms a Glycyl lysine isopeptide (Lys-Gly) (interchain with G-Cter in SUMO2); alternate linkage. Positions 174–201 (IARRSKTFNPGAGLPTDKKKGGPSPGDV) are disordered. S178 and S197 each carry phosphoserine. A Glycyl lysine isopeptide (Lys-Gly) (interchain with G-Cter in SUMO2) cross-link involves residue K221. The disordered stretch occupies residues 222-255 (GLLQSGQIPGRERRSGPTDDGEEEMEEDTVTNGS). A phosphoserine mark is found at S236 and S255. Over residues 240 to 255 (DDGEEEMEEDTVTNGS) the composition is skewed to acidic residues.

The protein belongs to the U2 small nuclear ribonucleoprotein A family. In terms of assembly, identified in the spliceosome B complex. Identified in the spliceosome C complex. Found in a pre-mRNA splicing complex with SFRS4, SFRS5, SNRNP70, SNRPA1, SRRM1 and SRRM2. Found in a pre-mRNA exonic splicing enhancer (ESE) complex with SNRNP70, SNRPA1, SRRM1 and TRA2B. Contributes to the binding of stem loop IV of U2 snRNA with SNRPB2.

The protein localises to the nucleus. In terms of biological role, involved in pre-mRNA splicing as component of the spliceosome. Associated with sn-RNP U2, where it contributes to the binding of stem loop IV of U2 snRNA. The sequence is that of U2 small nuclear ribonucleoprotein A' (SNRPA1) from Homo sapiens (Human).